A 226-amino-acid polypeptide reads, in one-letter code: Fibronectin type III domain-containing protein 10 (226 aa).

Positions M1–A20 are cleaved as a signal peptide. Topologically, residues A21–D182 are extracellular. Residues P74–E166 enclose the Fibronectin type-III domain. 2 N-linked (GlcNAc...) asparagine glycosylation sites follow: N86 and N109. A helical membrane pass occupies residues I183–L203. At L204–P226 the chain is on the cytoplasmic side.

The protein localises to the membrane. In Homo sapiens (Human), this protein is Fibronectin type III domain-containing protein 10 (FNDC10).